The sequence spans 252 residues: Adenosylcobinamide-GDP ribazoletransferase (252 aa).

The next 7 membrane-spanning stretches (helical) occupy residues 36–56 (LVPI…MLLV), 59–79 (FFYK…TGGI), 109–129 (VGTN…VILT), 133–153 (PAYM…GSIV), 170–192 (SFID…VIFL), 199–218 (GYII…KYFT), and 228–248 (ILGA…YAVL).

The protein belongs to the CobS family. It depends on Mg(2+) as a cofactor.

The protein resides in the cell membrane. It catalyses the reaction alpha-ribazole + adenosylcob(III)inamide-GDP = adenosylcob(III)alamin + GMP + H(+). The enzyme catalyses alpha-ribazole 5'-phosphate + adenosylcob(III)inamide-GDP = adenosylcob(III)alamin 5'-phosphate + GMP + H(+). It functions in the pathway cofactor biosynthesis; adenosylcobalamin biosynthesis; adenosylcobalamin from cob(II)yrinate a,c-diamide: step 7/7. Its function is as follows. Joins adenosylcobinamide-GDP and alpha-ribazole to generate adenosylcobalamin (Ado-cobalamin). Also synthesizes adenosylcobalamin 5'-phosphate from adenosylcobinamide-GDP and alpha-ribazole 5'-phosphate. This is Adenosylcobinamide-GDP ribazoletransferase from Clostridium acetobutylicum (strain ATCC 824 / DSM 792 / JCM 1419 / IAM 19013 / LMG 5710 / NBRC 13948 / NRRL B-527 / VKM B-1787 / 2291 / W).